Here is an 81-residue protein sequence, read N- to C-terminus: Sulfur carrier protein TusA (81 aa).

Residue Cys-19 is the Cysteine persulfide intermediate of the active site.

The protein belongs to the sulfur carrier protein TusA family.

The protein resides in the cytoplasm. Sulfur carrier protein which probably makes part of a sulfur-relay system. This Shewanella sediminis (strain HAW-EB3) protein is Sulfur carrier protein TusA.